The chain runs to 355 residues: 45 kDa calcium-binding protein (355 aa).

An N-terminal signal peptide occupies residues 1-29 (MASRQGPLCGLAPCCLWLLGVILLMNASA). Residue Asn-26 is glycosylated (N-linked (GlcNAc...) asparagine). 2 EF-hand domains span residues 91–126 (KSRRKLMVIFSKVDLNTDRRISAKEMQKWIMQKTAE) and 130–165 (EAVAESRAHFRAVDPDGDGHVSWDEYKVKFLATKGH). Residue Ser-92 is modified to Phosphoserine. Ca(2+) contacts are provided by Asp-104, Asn-106, Asp-108, Arg-110, Glu-115, Asp-143, Asp-145, Asp-147, His-149, and Glu-154. A phosphothreonine mark is found at Thr-186 and Thr-210. EF-hand domains are found at residues 226–261 (MLQFMVKEIIRDLDQDGDKKLSLSEFISLPVGTVEN), 271–306 (WVRDRKREFEELIDANHDGIVTMAELEDYMDPMNEF), and 307–342 (SALNEAKQMIAIADENQNHYLEPEEVLKYSEFFTGS). Residues Asp-239, Asp-241, Asp-243, Lys-245, and Glu-250 each coordinate Ca(2+). Thr-258 is subject to Phosphothreonine. Asp-284, Asn-286, and Asp-288 together coordinate Ca(2+). At Thr-292 the chain carries Phosphothreonine. Residues Glu-295, Asp-320, Asn-322, Asn-324, Tyr-326, and Glu-331 each coordinate Ca(2+). The necessary for intracellular retention in Golgi apparatus lumen stretch occupies residues 302 to 355 (PMNEFSALNEAKQMIAIADENQNHYLEPEEVLKYSEFFTGSKLVDYARSVHEEF).

It belongs to the CREC family.

It localises to the golgi apparatus lumen. May regulate calcium-dependent activities in the endoplasmic reticulum lumen or post-ER compartment. The protein is 45 kDa calcium-binding protein (SDF4) of Capra hircus (Goat).